Consider the following 621-residue polypeptide: MRRSVCYVTPSVARAGQISTWRFEYSSANFLPEGTLLKFDLGIDGRPIDWEIPSTDLSQPCNTIYLETPSESIVTAKAVYAPGSYIPTFEFILPCEIEAGDTFSIILGSSPNFPQEDASGNGAQLFTQRRKPFSLYVDPTGKGNFEDPDIFTIDIRGNVLKNIRIFAPSYVVKNKRFDITVRFEDEFGNLTNFSPEETQIELSYEHLRENLSWQLFIPETGFVILPNLYFNEPGIYRIQLRNQATKEIFTSAPIKCFTETSPHLLWGLLHGESERVDSEGNIESCLRYFRDDCALNFFATSSFEIQDGLTPETIKSINQTVSDFNEEDRFIALSGAQYVSEEPGEGIREVLLIKEPKSPGKHKECKLFPLSKLYKQSTSHELISIPSFTASKKFGCDFQNFHAEFERVVEIYNAWGCSERTEAEGNPFPIKGSIDSENPEGTILSALKRNLRFGFVAGGLDDRNLYSNFFDSDQQQYSPGLTAVICNKYSRDSLLEALYQRQCYATTGQRIIVSFQITSAPMGSELSTAIKPGLMINRHISGYVAGTAKISTIEIIRNGDTLHTFYPDGNNFEYEYDDLTPFAQATLADPKNGAPFAFYYLRVTQENGAMAWSSPIWIDLN.

The protein belongs to the chlamydial CPn_0512/CT_425/TC_0708 family.

This is an uncharacterized protein from Chlamydia muridarum (strain MoPn / Nigg).